A 770-amino-acid polypeptide reads, in one-letter code: 1,4-alpha-glucan branching enzyme GlgB (770 aa).

The active-site Nucleophile is the Asp433. Glu486 functions as the Proton donor in the catalytic mechanism.

Belongs to the glycosyl hydrolase 13 family. GlgB subfamily. In terms of assembly, monomer.

It carries out the reaction Transfers a segment of a (1-&gt;4)-alpha-D-glucan chain to a primary hydroxy group in a similar glucan chain.. It functions in the pathway glycan biosynthesis; glycogen biosynthesis. Its function is as follows. Catalyzes the formation of the alpha-1,6-glucosidic linkages in glycogen by scission of a 1,4-alpha-linked oligosaccharide from growing alpha-1,4-glucan chains and the subsequent attachment of the oligosaccharide to the alpha-1,6 position. The protein is 1,4-alpha-glucan branching enzyme GlgB (glgB) of Synechocystis sp. (strain ATCC 27184 / PCC 6803 / Kazusa).